A 252-amino-acid polypeptide reads, in one-letter code: Small ribosomal subunit protein uS3 (252 aa).

A KH type-2 domain is found at 39–111 (IRKLINNFAK…EVNLNVLEVK (73 aa)). The segment at 222 to 252 (KPFASQSSNTPNRRPRNFKGGNNNHVNAKKN) is disordered. Residues 241–252 (GGNNNHVNAKKN) are compositionally biased toward polar residues.

This sequence belongs to the universal ribosomal protein uS3 family. In terms of assembly, part of the 30S ribosomal subunit. Forms a tight complex with proteins S10 and S14.

Binds the lower part of the 30S subunit head. Binds mRNA in the 70S ribosome, positioning it for translation. In Phytoplasma sp. (strain STRAWB2), this protein is Small ribosomal subunit protein uS3.